Here is a 539-residue protein sequence, read N- to C-terminus: T-complex protein 1 subunit delta (539 aa).

Residues 1 to 28 (MPENVASRSGPPAAGPGNRGKGAYQDRD) form a disordered region. An Omega-N-methylarginine modification is found at Arg-19. Lys-21 bears the N6-acetyllysine mark. Position 36 is a phosphoserine (Ser-36). ADP is bound at residue Gly-53. Gly-53 serves as a coordination point for ATP. Asp-104 contributes to the Mg(2+) binding site. 7 residues coordinate ADP: Gly-105, Thr-106, Thr-107, Ser-108, Asn-172, Ser-173, and Lys-174. ATP is bound by residues Gly-105 and Thr-106. Residue Lys-174 participates in ATP binding. A phosphoserine mark is found at Ser-184 and Ser-202. Lys-288, Lys-302, Lys-319, and Lys-326 each carry N6-acetyllysine. Gly-425 provides a ligand contact to ADP. Ser-444 bears the Phosphoserine mark. Gln-510 contacts ADP.

The protein belongs to the TCP-1 chaperonin family. Component of the chaperonin-containing T-complex (TRiC), a hexadecamer composed of two identical back-to-back stacked rings enclosing a protein folding chamber. Each ring is made up of eight different subunits: TCP1/CCT1, CCT2, CCT3, CCT4, CCT5, CCT6A/CCT6, CCT7, CCT8. Interacts with PACRG. Interacts with DNAAF4. Interacts with DLEC1.

It is found in the cytoplasm. Its subcellular location is the melanosome. The protein resides in the cytoskeleton. It localises to the microtubule organizing center. The protein localises to the centrosome. It is found in the cilium basal body. It catalyses the reaction ATP + H2O = ADP + phosphate + H(+). In terms of biological role, component of the chaperonin-containing T-complex (TRiC), a molecular chaperone complex that assists the folding of actin, tubulin and other proteins upon ATP hydrolysis. The TRiC complex mediates the folding of WRAP53/TCAB1, thereby regulating telomere maintenance. As part of the TRiC complex may play a role in the assembly of BBSome, a complex involved in ciliogenesis regulating transports vesicles to the cilia. This Rattus norvegicus (Rat) protein is T-complex protein 1 subunit delta (Cct4).